Here is a 572-residue protein sequence, read N- to C-terminus: Phenylalanine--tRNA ligase beta subunit (572 aa).

The region spanning 278–353 is the B5 domain; the sequence is LTPKEFEVEF…IAYGYNEIKP (76 aa). 4 residues coordinate Mg(2+): aspartate 331, aspartate 337, glutamate 340, and aspartate 341.

The protein belongs to the phenylalanyl-tRNA synthetase beta subunit family. Type 2 subfamily. Tetramer of two alpha and two beta subunits. Requires Mg(2+) as cofactor.

The protein localises to the cytoplasm. The enzyme catalyses tRNA(Phe) + L-phenylalanine + ATP = L-phenylalanyl-tRNA(Phe) + AMP + diphosphate + H(+). The protein is Phenylalanine--tRNA ligase beta subunit of Thermococcus onnurineus (strain NA1).